Reading from the N-terminus, the 582-residue chain is uncharacterized protein (582 aa).

A helical transmembrane segment spans residues 20-40 (GFWALGLFGAAINAFSAVLIV).

The protein localises to the membrane. This is an uncharacterized protein from Mycoplasma pneumoniae (strain ATCC 29342 / M129 / Subtype 1) (Mycoplasmoides pneumoniae).